A 286-amino-acid chain; its full sequence is Acetyl-coenzyme A carboxylase carboxyl transferase subunit beta (286 aa).

The region spanning 26 to 286 is the CoA carboxyltransferase N-terminal domain; the sequence is LWEKCVKCDA…LAKFTRRAAV (261 aa). The Zn(2+) site is built by Cys30, Cys33, Cys49, and Cys52. The C4-type zinc-finger motif lies at 30–52; that stretch reads CVKCDAVLYKPELEKNLDVCPKC.

This sequence belongs to the AccD/PCCB family. As to quaternary structure, acetyl-CoA carboxylase is a heterohexamer composed of biotin carboxyl carrier protein (AccB), biotin carboxylase (AccC) and two subunits each of ACCase subunit alpha (AccA) and ACCase subunit beta (AccD). It depends on Zn(2+) as a cofactor.

It is found in the cytoplasm. It carries out the reaction N(6)-carboxybiotinyl-L-lysyl-[protein] + acetyl-CoA = N(6)-biotinyl-L-lysyl-[protein] + malonyl-CoA. It participates in lipid metabolism; malonyl-CoA biosynthesis; malonyl-CoA from acetyl-CoA: step 1/1. Functionally, component of the acetyl coenzyme A carboxylase (ACC) complex. Biotin carboxylase (BC) catalyzes the carboxylation of biotin on its carrier protein (BCCP) and then the CO(2) group is transferred by the transcarboxylase to acetyl-CoA to form malonyl-CoA. This chain is Acetyl-coenzyme A carboxylase carboxyl transferase subunit beta, found in Cellvibrio japonicus (strain Ueda107) (Pseudomonas fluorescens subsp. cellulosa).